A 374-amino-acid polypeptide reads, in one-letter code: Putative F-box protein At5g60060 (374 aa).

Positions 9 to 61 constitute an F-box domain; that stretch reads SQWSDLPLDILELISDRLDHDSSDTIHLLCLRSVCATWRLSLPLSNKNNRLSK.

In Arabidopsis thaliana (Mouse-ear cress), this protein is Putative F-box protein At5g60060.